The sequence spans 25 residues: MMFDSLLSTITGGGVSHSFSIAMVY.

This is an uncharacterized protein from Ornithodoros (relapsing fever ticks).